The sequence spans 288 residues: MAAKIIDGKTIAQQVRSEVAQKVQARVAAGLRAPGLAVVLVGSNPASQIYVASKRKACDEVGFVSRSYDLPETTSEAELLELIDTLNADSTIDGILVQLPLPAGIDNVKVLERIAPDKDVDGFHPYNVGRLCQRAPRLRPCTPRGIVTLLERYNIDTYGLNAVVIGASNIVGRPMSMELLLAGCTTTVTHRFTKDLRHHVEHADLLIVAVGKPGFIPGEWIKEGAIVIDVGINRLENGKVVGDVVFEEAAARASYITPVPGGVGPMTVATLIENTLQACTEYHDPQGK.

Residues 166–168 (GAS) and Ile232 each bind NADP(+).

The protein belongs to the tetrahydrofolate dehydrogenase/cyclohydrolase family. In terms of assembly, homodimer.

The catalysed reaction is (6R)-5,10-methylene-5,6,7,8-tetrahydrofolate + NADP(+) = (6R)-5,10-methenyltetrahydrofolate + NADPH. It carries out the reaction (6R)-5,10-methenyltetrahydrofolate + H2O = (6R)-10-formyltetrahydrofolate + H(+). Its pathway is one-carbon metabolism; tetrahydrofolate interconversion. Catalyzes the oxidation of 5,10-methylenetetrahydrofolate to 5,10-methenyltetrahydrofolate and then the hydrolysis of 5,10-methenyltetrahydrofolate to 10-formyltetrahydrofolate. This chain is Bifunctional protein FolD, found in Salmonella arizonae (strain ATCC BAA-731 / CDC346-86 / RSK2980).